The chain runs to 2150 residues: MSDEPPIVLPTEEDGPFSNCVSIAFVNDKSIPVELRIRKAIRGKVTFTQELVVAARRLYLDGELERPDLNYHVAADFYDPFMIPVPDHRNWEYNPLYPREWPRLIDRDLVQKIKMSNTYKKNQARRKRRRLLRIFHRKRGGEFLNYLWHSKENDVHYKRYMAAYQFPLPFEKCIRDVVREELKDPETSFSKPPSVVHHSKIRPATPDLLKLAKYLGKDRFCFIVTPFKFRSQFRLRYYKKSPFKRSNILEKWLKFKKVRDQGVFNIRDAAREVKKLLQRKNVYHMTDPQCEQEFWDVYRLQMQWLEEDNIEENITMLRENLSKVTDEEFNRSVYIMRPENRASIHDDVTFTTDAEINLKPIVLELFRNNMPLEDIRQVKECIDDMINLTVCQELIPQVATIETVRDYSGVEQHRLKYIRPENELEIMFQLATVLVKNENTHDQEITSPMFALLRTEQYLWSIPLRPFLRMYTDWRKTKLNFKKFRKFSPELVSKAPIDLFKVFLTTNMDKKGVATKDTDCFDYRTASEIKKLYHEEFIRVRPIIEHQRFHRCYTSVITEEPLPNPFYWVHRGQWEKVYECNWKQRVKPLAGRFSWKTKHPNICDLPRLEKDDKQEMEMLAKMREKIREYNKEKEKHPFYVSSSLPEFASTSDFVKFPISNTGIKYTAPRRNQPKVQRSLVTYTRFRLAELEDKDFSFPEEKMLEKNRLLEKLNFEERLQLDALMSKDVKYKPRMIPEKGFLQLQDEKLILKRLCEKEDEWSGKQKRRFPDLYEQATQEAERLGDPDASTSGTSNKELGLLPVWKHDDFRDLKKINVLGSKEYPISSPYLIKRLHYDIHLEIVRDKLKSWIYRTELWEKMKPVYERLKRDKEKREKEWHEMRAAQRAQKEKEEEDQRRMDMGIEHGQESLLKSITPEVEQQILLPISRENSFEEMLPAPQEAYDEDLDQDIDIHFDGAESVCTGIRLDSEDRELVDSPDQVENEEPERVEAVTENIRQEMSDAEMRDLMRKKREQYSMLFPNVPQPFQPLNRFDVTAPGAGIVPPYDEAPDFDLSAYLEEDHVRIPTLSTVEINSLLKDQDLVEEQEIVEEEETPLVVEEPDIPAAPVLSAEEKASRISREMSALRKLPDAAFNYASDRDGVVVEEVETIEEIQEIYNDKLEKMIAARLGSIAQGANIERLSEDQLLGDQGSEDISFEEIQVDLLLESGVEVQVNQSVTISRSSTSFESLLVEDPEEHPEQLPVSASEKANNQIVPEVEVEGSVVPVTNQQEENVTSEGPTLQEGSSIPSSSHIYTVDELLGTESPGPEATETPVAEESPKKKSGKTTRGRPKKVKENLKKRIQPRRGQKEEAAHEPEVVEEQEQVEPEVGPEVVHEPVPAPAAQLETEPIEQQIEEPDKVFEPIIEALPLFETSPVPAPEGNIPSRAHSSDDDVQVISSETDPNGPINLVEQVQNDKLTAYQYSTEELLGEYGELDEAGAPSPSEIVVHDEVLQDEVLQPNPKSSKKRGRRRKKTPPHIAKARKVFTSISKTEEIELAPTPTQQSRKRMANVSSEEATATRRQKRAKVEEPNDSDVSRVLTPEPEDLHETERPGHVGEEGFETPSLRTGRESTASSVKTSRSKRLFLSKNNPVPRMRIQSQAGTNASPTPARRTGVARDSVSPDGASEKLKQLPKSVQDIFEVFDVERSAERGESATVTNLEGPVKIEIEDENWMAPPAITETSRKSKKRLRAEKQQQILDDIKLELNGEPPQKRECEILMERVQVKIEEGVENADCRIVQANFNCKSVEEHETLPLKIIRVFEENEKPVHKFFMTQIIWKEINEAFMTDPEKFMLLVRILFSDRNISGQIYKISMTVTDRIKGFDDDFIKLLTQFPKKLSQEHKPLVDYNKLAHALREKASLHLNNHKITPFTFHGVISNITEMKEKIIGRCEIGMLTDGDRDVLNSTENMLLGAYMKSVLRMTAQSQVSWAHPEYIKRRLEMIYYGWRMFLGSGGFFRVALAINRKDVKPMSQQFRDFFIEYLKDVNENYAKAVELVQMDEDKLMEAMIEKAGLSSIDLLALDEDVQGQVSESHKHKCVQCSIRNQSVYFSSYSLLELHGKLHQNLHELAPEDADDCQDCYETLTSSFEVIVHRINHHHSRRCFFADD.

Positions 443–987 (QEITSPMFAL…DQVENEEPER (545 aa)) are dosage compensation domain 1. Disordered regions lie at residues 874-894 (EKEW…EEED), 1261-1373 (GSVV…GPEV), 1411-1448 (FETS…GPIN), and 1491-1670 (EVLQ…SEKL). Positions 1267-1293 (TNQQEENVTSEGPTLQEGSSIPSSSHI) are enriched in polar residues. Positions 1321–1333 (KKSGKTTRGRPKK) are enriched in basic residues. Residues 1347–1357 (GQKEEAAHEPE) are compositionally biased toward basic and acidic residues. The segment covering 1504–1524 (SSKKRGRRRKKTPPHIAKARK) has biased composition (basic residues). The interval 1508–1516 (RGRRRKKTP) is sex determination domain. The span at 1585–1598 (EDLHETERPGHVGE) shows a compositional bias: basic and acidic residues. Positions 1638-1648 (IQSQAGTNASP) are enriched in polar residues. 2 C2H2-type zinc fingers span residues 2078-2105 (HKCV…GKLH) and 2117-2141 (DDCQ…NHHH). The tract at residues 2080–2105 (CVQCSIRNQSVYFSSYSLLELHGKLH) is dosage compensation domain 2.

In terms of assembly, component of the SDC complex, which consists of sdc-1, sdc-2 and sdc-3. Within the complex, interacts with sdc-1 and sdc-2. Interacts with dpy-21. Post-translationally, sumoylated. Sumoylation is important for assembly of the dosage compensation complex and its robust binding to the X chromosome. Expressed in somatic and in germline tissues in hermaphrodites (XX). In males (XO), only present in embryos younger than the 100-cell stage (at protein level).

It localises to the chromosome. The protein localises to the nucleus. In terms of biological role, component of the SDC complex that functions in sex determination and in X chromosome dosage compensation specifically in hermaphrodite (XX) animals. Plays a central role in the recruitment of the condensin I-like dosage compensation complex to the male sex-determining autosomal gene her-1, thereby contributing to its repression and initiating hermaphrodite sexual development. Involved in the recruitment and assembly of the dosage compensation complex and the dosage compensation protein dpy-21 onto the X chromosomes in hermaphrodites, which leads to a reduction of X-linked gene transcription and an equalization of X-linked gene expression between the sexes. The chain is Zinc finger protein sdc-3 (sdc-3) from Caenorhabditis elegans.